Here is a 65-residue protein sequence, read N- to C-terminus: Large ribosomal subunit protein bL32 (65 aa).

It belongs to the bacterial ribosomal protein bL32 family.

This is Large ribosomal subunit protein bL32 (rpmF) from Rickettsia prowazekii (strain Madrid E).